The sequence spans 355 residues: Cyanide hydratase (355 aa).

Positions 6 to 286 (YKAAAVTSEP…GLLFVDIDLN (281 aa)) constitute a CN hydrolase domain. Glutamate 46 functions as the Proton acceptor in the catalytic mechanism. Residue lysine 128 is part of the active site. Cysteine 163 acts as the Nucleophile in catalysis.

The protein belongs to the carbon-nitrogen hydrolase superfamily. Nitrilase family. Oligomer of dimers, forming left-handed helical fibers.

The enzyme catalyses formamide = hydrogen cyanide + H2O. Its function is as follows. Catalyzes the hydration of cyanide to formamide. Degradation of cyanide may be important for plant pathogenic fungi in infection of cyanogenic plants. Also has low but significant nitrilase activity with acetonitrile, propionitrile and benzonitrile. The protein is Cyanide hydratase of Gibberella baccata (Fusarium lateritium).